The sequence spans 190 residues: Vacuolar protein sorting-associated protein 29 (190 aa).

This sequence belongs to the VPS29 family. In terms of assembly, component of the retromer complex which consists of VPS29 (MAG1), VPS26 (VPS26A or VPS26B), VPS35 (VPS35A or VPS35B or VPS35C), VPS5/17 (SNX1 or SNX2A or SNX2B). Component of a retromer subcomplex consisting of VPS29 (MAG1), VPS26 (VPS26A or VPS26B), VPS35 (VPS35A or VPS35B or VPS35C).

The protein resides in the cytoplasm. Its subcellular location is the endosome membrane. It localises to the prevacuolar compartment membrane. The protein localises to the golgi apparatus. It is found in the trans-Golgi network membrane. The protein resides in the late endosome membrane. Its function is as follows. Plays a role in vesicular protein sorting. Component of the membrane-associated retromer complex which is essential in endosome-to-Golgi retrograde transport. Required for the auxin-carrier protein PIN2 sorting to the lytic vacuolar pathway and the PIN1 recycling to the plasma membrane, thus influencing auxin transport orientation. Also involved in the efficient sorting of seed storage proteins globulin 12S and albumin 2S. The VPS29-VPS26-VPS35 subcomplex may be involved in recycling of specific cargos from endosome to the plasma membrane. This Arabidopsis thaliana (Mouse-ear cress) protein is Vacuolar protein sorting-associated protein 29.